The chain runs to 414 residues: Eukaryotic initiation factor 4A-1 (414 aa).

The short motif at E41 to Q69 is the Q motif element. Residues I72–I242 form the Helicase ATP-binding domain. A85 to T92 contributes to the ATP binding site. Positions D190–D193 match the DEAD box motif. In terms of domain architecture, Helicase C-terminal spans G253 to L414.

Belongs to the DEAD box helicase family. eIF4A subfamily. EIF4F is a multi-subunit complex, the composition of which varies with external and internal environmental conditions. It is composed of at least EIF4A, EIF4E and EIF4G.

The catalysed reaction is ATP + H2O = ADP + phosphate + H(+). Its function is as follows. ATP-dependent RNA helicase which is a subunit of the eIF4F complex involved in cap recognition and is required for mRNA binding to ribosome. In the current model of translation initiation, eIF4A unwinds RNA secondary structures in the 5'-UTR of mRNAs which is necessary to allow efficient binding of the small ribosomal subunit, and subsequent scanning for the initiator codon. This Oryza sativa subsp. japonica (Rice) protein is Eukaryotic initiation factor 4A-1.